A 266-amino-acid polypeptide reads, in one-letter code: Hydroxypyruvate/pyruvate aldolase (266 aa).

Catalysis depends on His-48, which acts as the Proton acceptor. 2 residues coordinate a divalent metal cation: Glu-152 and Asp-178.

Belongs to the HpcH/HpaI aldolase family. Requires a divalent metal cation as cofactor.

It carries out the reaction D-glyceraldehyde + pyruvate = 2-dehydro-3-deoxy-L-galactonate. The catalysed reaction is 2-dehydro-3-deoxy-D-gluconate = D-glyceraldehyde + pyruvate. Functionally, aldolase which can catalyze in vitro the aldolisation reaction between hydroxypyruvate (HPA) or pyruvate (PA) and D-glyceraldehyde (D-GA). The condensation of pyruvate and D-glyceraldehyde produces 2-dehydro-3-deoxy-L-galactonate as the major product and 2-dehydro-3-deoxy-D-gluconate. Has weak activity with hydroxypyruvate and D-glyceraldehyde. In Agrobacterium fabrum (strain C58 / ATCC 33970) (Agrobacterium tumefaciens (strain C58)), this protein is Hydroxypyruvate/pyruvate aldolase.